Reading from the N-terminus, the 321-residue chain is Replication factor C small subunit (321 aa).

43 to 50 (GFAGVGKT) lines the ATP pocket.

It belongs to the activator 1 small subunits family. RfcS subfamily. As to quaternary structure, heteromultimer composed of small subunits (RfcS) and large subunits (RfcL).

Functionally, part of the RFC clamp loader complex which loads the PCNA sliding clamp onto DNA. This chain is Replication factor C small subunit, found in Methanosphaera stadtmanae (strain ATCC 43021 / DSM 3091 / JCM 11832 / MCB-3).